A 910-amino-acid polypeptide reads, in one-letter code: Valine--tRNA ligase (910 aa).

The 'HIGH' region motif lies at 45–55 (PNVTGSLHMGH). Residues 554-558 (KMSKS) carry the 'KMSKS' region motif. Lys-557 lines the ATP pocket. Residues 842 to 910 (DLQAEAARLA…TAESRIRDAS (69 aa)) adopt a coiled-coil conformation.

Belongs to the class-I aminoacyl-tRNA synthetase family. ValS type 1 subfamily. As to quaternary structure, monomer.

It localises to the cytoplasm. The enzyme catalyses tRNA(Val) + L-valine + ATP = L-valyl-tRNA(Val) + AMP + diphosphate. Catalyzes the attachment of valine to tRNA(Val). As ValRS can inadvertently accommodate and process structurally similar amino acids such as threonine, to avoid such errors, it has a 'posttransfer' editing activity that hydrolyzes mischarged Thr-tRNA(Val) in a tRNA-dependent manner. The sequence is that of Valine--tRNA ligase from Brucella suis biovar 1 (strain 1330).